We begin with the raw amino-acid sequence, 258 residues long: Ciliogenesis and planar polarity effector 2 (258 aa).

The interval 51–258 (IDTASYKIFV…LPSSPESAPG (208 aa)) is small GTPase-like. Residues Ser64, Gly65, Gly67, Lys68, Thr69, Ala70, Ile82, His84, Thr87, Lys176, Asp178, and Ser206 each contribute to the GTP site.

This sequence belongs to the small GTPase superfamily. Rab family. Interacts with FUZ. Associates with the CPLANE (ciliogenesis and planar polarity effectors) complex via its interaction with FUZ.

It is found in the cytoplasm. The protein localises to the cytoskeleton. It localises to the cilium basal body. Its subcellular location is the microtubule organizing center. The protein resides in the centrosome. It is found in the centriole. Its function is as follows. Required for efficient primary cilia initiation, regulating a late step in cilia initiation. Plays a role in the final maturation of the mother centriole and ciliary vesicle that allows extension of the ciliary axoneme. This Mus musculus (Mouse) protein is Ciliogenesis and planar polarity effector 2 (Cplane2).